A 539-amino-acid chain; its full sequence is Membrane protein insertase YidC (539 aa).

5 helical membrane passes run 6–26 (TLLV…WQVA), 341–361 (SVIQ…TFIV), 416–436 (LGGC…YWAL), 454–474 (LSAQ…MFLI), and 495–515 (PVMF…YWLV).

This sequence belongs to the OXA1/ALB3/YidC family. Type 1 subfamily. As to quaternary structure, interacts with the Sec translocase complex via SecD. Specifically interacts with transmembrane segments of nascent integral membrane proteins during membrane integration.

The protein localises to the cell inner membrane. Its function is as follows. Required for the insertion and/or proper folding and/or complex formation of integral membrane proteins into the membrane. Involved in integration of membrane proteins that insert both dependently and independently of the Sec translocase complex, as well as at least some lipoproteins. Aids folding of multispanning membrane proteins. The sequence is that of Membrane protein insertase YidC from Vibrio vulnificus (strain YJ016).